We begin with the raw amino-acid sequence, 663 residues long: Endopolyphosphatase (663 aa).

The Cytoplasmic segment spans residues 1 to 14 (MAVNEKDVGRKSRV). Residues 15 to 35 (SVVLWVFIALGTLFLCKNAFT) traverse the membrane as a helical; Signal-anchor for type II membrane protein segment. At 36-663 (FSSESIHGLK…ISTGYEDERN (628 aa)) the chain is on the vacuolar side. 2 N-linked (GlcNAc...) asparagine glycosylation sites follow: N487 and N526. Residues 534 to 564 (SAEQNKKKKKKNGKPDKSIPRKKPDELPAGP) are disordered. Over residues 546 to 559 (GKPDKSIPRKKPDE) the composition is skewed to basic and acidic residues.

The protein belongs to the endopolyphosphatase PPN1 family. A divalent metal cation is required as a cofactor. In terms of processing, processing by proteases in the vacuole may be required for activation.

The protein localises to the vacuole membrane. It catalyses the reaction [phosphate](n+1) + n H2O = (n+1) phosphate + n H(+). Its function is as follows. Catalyzes the hydrolysis of inorganic polyphosphate (polyP) chains of many hundreds of phosphate residues into shorter lengths. In Candida glabrata (strain ATCC 2001 / BCRC 20586 / JCM 3761 / NBRC 0622 / NRRL Y-65 / CBS 138) (Yeast), this protein is Endopolyphosphatase (PPN1).